We begin with the raw amino-acid sequence, 1368 residues long: DNA-directed RNA polymerase subunit beta (1368 aa).

This sequence belongs to the RNA polymerase beta chain family. The RNAP catalytic core consists of 2 alpha, 1 beta, 1 beta' and 1 omega subunit. When a sigma factor is associated with the core the holoenzyme is formed, which can initiate transcription.

It carries out the reaction RNA(n) + a ribonucleoside 5'-triphosphate = RNA(n+1) + diphosphate. Its function is as follows. DNA-dependent RNA polymerase catalyzes the transcription of DNA into RNA using the four ribonucleoside triphosphates as substrates. The chain is DNA-directed RNA polymerase subunit beta from Burkholderia multivorans (strain ATCC 17616 / 249).